The following is a 783-amino-acid chain: Type 4 coupling protein DotL (783 aa).

Residues 47 to 67 (VSYYFSEAATFLLIMGGIFFL) traverse the membrane as a helical segment. The tract at residues 100 to 500 (NIARGITFFG…ICMKLEDPTE (401 aa)) is ATPase domain. Residues 671–773 (VEGALTIFSK…SAKISAEREK (103 aa)) are interaction with IcmS/IcmW.

As to quaternary structure, the T4BSS is a complex nanomachine composed of several subcomplexes. This subunit is part of the Type IV Coupling Complex (T4CC), a subcomplex composed of the DotLMNYZ core and the IcmSW-LvgA adapter subunits, linked by the C-terminal tail of DotL. Six DotLMNYZ hetero-pentameric units may assemble into a hexameric nanomachine, forming an inner membrane channel for effectors to pass through. Interacts directly with DotM. Interacts directly, via its C-terminal region, with the type IV adapter proteins IcmS and IcmW. Also interacts with DotN and LvgA via its C-terminal region.

The protein resides in the cell inner membrane. Functionally, component of the Dot/Icm type IVB secretion system (T4BSS), which is used to inject bacterial effector proteins into eukaryotic host cells. Part of a subcomplex which recruits effector proteins and delivers them to the core transmembrane subcomplex. Plays a central role in the assembly of the subcomplex. Required for the recruitment of IcmS and IcmW to the inner membrane and for the translocation of adapter-dependent substrates. May have ATPase activity. This is Type 4 coupling protein DotL from Legionella pneumophila subsp. pneumophila (strain Philadelphia 1 / ATCC 33152 / DSM 7513).